A 476-amino-acid polypeptide reads, in one-letter code: Bifunctional protein HldE (476 aa).

The segment at 1-319 (MKPTLPNYDQ…EAIHGSQDSG (319 aa)) is ribokinase. ATP is bound at residue 195 to 198 (NMLE). Asp264 is an active-site residue. Positions 344–476 (MTNGCFDILH…IIEAIKGGRG (133 aa)) are cytidylyltransferase.

It in the N-terminal section; belongs to the carbohydrate kinase PfkB family. The protein in the C-terminal section; belongs to the cytidylyltransferase family. In terms of assembly, homodimer.

It catalyses the reaction D-glycero-beta-D-manno-heptose 7-phosphate + ATP = D-glycero-beta-D-manno-heptose 1,7-bisphosphate + ADP + H(+). It carries out the reaction D-glycero-beta-D-manno-heptose 1-phosphate + ATP + H(+) = ADP-D-glycero-beta-D-manno-heptose + diphosphate. It functions in the pathway nucleotide-sugar biosynthesis; ADP-L-glycero-beta-D-manno-heptose biosynthesis; ADP-L-glycero-beta-D-manno-heptose from D-glycero-beta-D-manno-heptose 7-phosphate: step 1/4. It participates in nucleotide-sugar biosynthesis; ADP-L-glycero-beta-D-manno-heptose biosynthesis; ADP-L-glycero-beta-D-manno-heptose from D-glycero-beta-D-manno-heptose 7-phosphate: step 3/4. Its function is as follows. Catalyzes the phosphorylation of D-glycero-D-manno-heptose 7-phosphate at the C-1 position to selectively form D-glycero-beta-D-manno-heptose-1,7-bisphosphate. Catalyzes the ADP transfer from ATP to D-glycero-beta-D-manno-heptose 1-phosphate, yielding ADP-D-glycero-beta-D-manno-heptose. This chain is Bifunctional protein HldE, found in Aliivibrio fischeri (strain ATCC 700601 / ES114) (Vibrio fischeri).